The chain runs to 350 residues: Phenylalanine--tRNA ligase alpha subunit (350 aa).

A Mg(2+)-binding site is contributed by E259.

It belongs to the class-II aminoacyl-tRNA synthetase family. Phe-tRNA synthetase alpha subunit type 1 subfamily. As to quaternary structure, tetramer of two alpha and two beta subunits. Mg(2+) is required as a cofactor.

It localises to the cytoplasm. It carries out the reaction tRNA(Phe) + L-phenylalanine + ATP = L-phenylalanyl-tRNA(Phe) + AMP + diphosphate + H(+). This Rickettsia typhi (strain ATCC VR-144 / Wilmington) protein is Phenylalanine--tRNA ligase alpha subunit.